The chain runs to 325 residues: Malate dehydrogenase (325 aa).

NAD(+) is bound at residue 11–17 (GAAGQIA). Substrate-binding residues include arginine 92 and arginine 98. NAD(+)-binding positions include asparagine 105, glutamine 112, and 129 to 131 (VGN). Residues asparagine 131 and arginine 162 each coordinate substrate. Histidine 187 serves as the catalytic Proton acceptor.

The protein belongs to the LDH/MDH superfamily. MDH type 2 family.

The enzyme catalyses (S)-malate + NAD(+) = oxaloacetate + NADH + H(+). Catalyzes the reversible oxidation of malate to oxaloacetate. The polypeptide is Malate dehydrogenase (Methylococcus capsulatus (strain ATCC 33009 / NCIMB 11132 / Bath)).